A 289-amino-acid chain; its full sequence is Rhodopsin (289 aa).

Residues 1–7 lie on the Extracellular side of the membrane; sequence YLVNPAA. Residues 8 to 32 traverse the membrane as a helical segment; that stretch reads YAALGAYMFLLILIGFPINFLTLYV. The Cytoplasmic portion of the chain corresponds to 33 to 44; sequence TLEHKKLRTPLN. Residues 45–67 form a helical membrane-spanning segment; the sequence is YILLNLAVGNLFMVLGGFTTTMY. Topologically, residues 68-81 are extracellular; it reads TSMHGYFVLGRLGC. The cysteines at positions 81 and 158 are disulfide-linked. Residues 82–104 form a helical membrane-spanning segment; the sequence is NLEGFFATLGGEIALWSLVVLAI. A 'Ionic lock' involved in activated form stabilization motif is present at residues 105 to 107; that stretch reads ERW. Over 105 to 123 the chain is Cytoplasmic; that stretch reads ERWIVVCKPISKFRFTEDH. A helical transmembrane segment spans residues 124-144; it reads AIMGLAFSWVMGLACAVPPLV. The Extracellular segment spans residues 145 to 173; it reads GWSRYIPEGMKCSCGVDYYTRAEGFNNES. A glycan (N-linked (GlcNAc...) asparagine) is linked at asparagine 171. The helical transmembrane segment at 174–195 threads the bilayer; that stretch reads FVIYMFIVHFLIPLSVIFFCYG. Residues 196-223 are Cytoplasmic-facing; it reads RLLCAVKEAAAAQQESETTQRAEKEVSR. A helical transmembrane segment spans residues 224–245; it reads MVVIMVIGFLVCWLPYASVAWW. The Extracellular portion of the chain corresponds to 246–257; that stretch reads IFCNQGSDFGPI. Residues 258-279 traverse the membrane as a helical segment; that stretch reads FMTLPSFFAKRPAIYNPMIYIC. At lysine 267 the chain carries N6-(retinylidene)lysine. Residues 280–289 are Cytoplasmic-facing; it reads MNKQFRHCMI.

This sequence belongs to the G-protein coupled receptor 1 family. Opsin subfamily. Post-translationally, phosphorylated on some or all of the serine and threonine residues present in the C-terminal region. In terms of processing, contains one covalently linked retinal chromophore.

The protein localises to the membrane. It localises to the cell projection. Its subcellular location is the cilium. It is found in the photoreceptor outer segment. Its function is as follows. Photoreceptor required for image-forming vision at low light intensity. While most salt water fish species use retinal as chromophore, most freshwater fish use 3-dehydroretinal, or a mixture of retinal and 3-dehydroretinal. Light-induced isomerization of 11-cis to all-trans retinal triggers a conformational change that activates signaling via G-proteins. Subsequent receptor phosphorylation mediates displacement of the bound G-protein alpha subunit by arrestin and terminates signaling. The sequence is that of Rhodopsin (rho) from Cottinella boulengeri (Short-headed sculpin).